The following is a 162-amino-acid chain: Phosphopantetheine adenylyltransferase (162 aa).

T9 provides a ligand contact to substrate. ATP contacts are provided by residues 9-10 and H17; that span reads TF. Residues K41, L77, and R91 each coordinate substrate. ATP-binding positions include 92 to 94, E102, and 127 to 133; these read GLR and RQAIASK.

The protein belongs to the bacterial CoaD family. Homohexamer. Mg(2+) is required as a cofactor.

It is found in the cytoplasm. It catalyses the reaction (R)-4'-phosphopantetheine + ATP + H(+) = 3'-dephospho-CoA + diphosphate. It functions in the pathway cofactor biosynthesis; coenzyme A biosynthesis; CoA from (R)-pantothenate: step 4/5. Reversibly transfers an adenylyl group from ATP to 4'-phosphopantetheine, yielding dephospho-CoA (dPCoA) and pyrophosphate. This Cereibacter sphaeroides (strain ATCC 17025 / ATH 2.4.3) (Rhodobacter sphaeroides) protein is Phosphopantetheine adenylyltransferase.